The following is a 282-amino-acid chain: Putative SLC9B1-like protein SLC9B1P1 (282 aa).

The next 7 membrane-spanning stretches (helical) occupy residues 27–47, 51–71, 87–107, 135–155, 174–194, 198–218, and 239–259; these read LLAI…GGMI, IASL…GFFV, GFLV…IGLH, IITN…GAEV, LALC…GFSF, IFIA…GPLA, and VAFL…GILG.

Belongs to the monovalent cation:proton antiporter 1 (CPA1) transporter (TC 2.A.36) family.

It localises to the membrane. This Homo sapiens (Human) protein is Putative SLC9B1-like protein SLC9B1P1 (SLC9B1P1).